The following is a 184-amino-acid chain: Probable RNA 2'-phosphotransferase (184 aa).

It belongs to the KptA/TPT1 family.

In terms of biological role, removes the 2'-phosphate from RNA via an intermediate in which the phosphate is ADP-ribosylated by NAD followed by a presumed transesterification to release the RNA and generate ADP-ribose 1''-2''-cyclic phosphate (APPR&gt;P). May function as an ADP-ribosylase. The chain is Probable RNA 2'-phosphotransferase from Escherichia coli (strain K12 / MC4100 / BW2952).